We begin with the raw amino-acid sequence, 540 residues long: Anti-sigma-I factor RsgI7 (540 aa).

The RsgI N-terminal anti-sigma domain occupies 1-48; that stretch reads MRAMVVDMNDKYAVVVNKEGQYIKIKRKAEHRLGYQVELPDRVIGFER. Residues 1 to 50 are Cytoplasmic-facing; sequence MRAMVVDMNDKYAVVVNKEGQYIKIKRKAEHRLGYQVELPDRVIGFERRT. The helical transmembrane segment at 51-73 threads the bilayer; it reads LLKVVSVAAALLIVSSISFAVYS. At 74-540 the chain is on the extracellular side; that stretch reads YNLPYSYVNV…PGKEILKKRC (467 aa). Composition is skewed to basic and acidic residues over residues 238–256, 319–329, 338–351, 359–370, and 398–419; these read DIKK…KKVN, SGIDKGNKDSK, NDVK…KTNS, VSKDNKNDKADG, and SKDD…EDNK. Disordered regions lie at residues 238–429 and 481–540; these read DIKK…CPQY and QEEQ…KKRC. Residues 451 to 501 are a coiled coil; it reads KEDMTKQNDEWFKKMQEEQKKQYDEWLKKMQEEQKKQHDEWVKKMEEMKNT.

As to quaternary structure, interacts (via RsgI N-terminal anti-sigma domain) with SigI7.

The protein resides in the cell membrane. Its function is as follows. Anti-sigma factor for SigI7. Negatively regulates SigI7 activity through direct interaction. The chain is Anti-sigma-I factor RsgI7 from Acetivibrio thermocellus (strain ATCC 27405 / DSM 1237 / JCM 9322 / NBRC 103400 / NCIMB 10682 / NRRL B-4536 / VPI 7372) (Clostridium thermocellum).